We begin with the raw amino-acid sequence, 97 residues long: Aspartyl/glutamyl-tRNA(Asn/Gln) amidotransferase subunit C (97 aa).

The protein belongs to the GatC family. Heterotrimer of A, B and C subunits.

It catalyses the reaction L-glutamyl-tRNA(Gln) + L-glutamine + ATP + H2O = L-glutaminyl-tRNA(Gln) + L-glutamate + ADP + phosphate + H(+). The enzyme catalyses L-aspartyl-tRNA(Asn) + L-glutamine + ATP + H2O = L-asparaginyl-tRNA(Asn) + L-glutamate + ADP + phosphate + 2 H(+). In terms of biological role, allows the formation of correctly charged Asn-tRNA(Asn) or Gln-tRNA(Gln) through the transamidation of misacylated Asp-tRNA(Asn) or Glu-tRNA(Gln) in organisms which lack either or both of asparaginyl-tRNA or glutaminyl-tRNA synthetases. The reaction takes place in the presence of glutamine and ATP through an activated phospho-Asp-tRNA(Asn) or phospho-Glu-tRNA(Gln). The protein is Aspartyl/glutamyl-tRNA(Asn/Gln) amidotransferase subunit C of Sulfolobus acidocaldarius (strain ATCC 33909 / DSM 639 / JCM 8929 / NBRC 15157 / NCIMB 11770).